The primary structure comprises 429 residues: Glutamate-1-semialdehyde 2,1-aminomutase 1 (429 aa).

N6-(pyridoxal phosphate)lysine is present on lysine 268.

It belongs to the class-III pyridoxal-phosphate-dependent aminotransferase family. HemL subfamily. Homodimer. It depends on pyridoxal 5'-phosphate as a cofactor.

It localises to the cytoplasm. It catalyses the reaction (S)-4-amino-5-oxopentanoate = 5-aminolevulinate. Its pathway is porphyrin-containing compound metabolism; protoporphyrin-IX biosynthesis; 5-aminolevulinate from L-glutamyl-tRNA(Glu): step 2/2. The protein is Glutamate-1-semialdehyde 2,1-aminomutase 1 of Listeria monocytogenes serotype 4b (strain F2365).